Here is a 352-residue protein sequence, read N- to C-terminus: Sperm equatorial segment protein 1 (352 aa).

Residues 1 to 19 (MKSLVLLVALLLWSSSVPA) form the signal peptide. Asn128 carries an N-linked (GlcNAc...) asparagine glycan. The disordered stretch occupies residues 140 to 203 (IEKEEPEPEP…TESEDVPQLS (64 aa)). A compositionally biased stretch (polar residues) spans 166-193 (TESSTSPYVTSYKSPVTTSDRSTGIEIS).

This sequence belongs to the SPESP1 family. Post-translationally, glycosylated. In testis there are two predominant forms of 77- and 67-kDa and a form of 47-kDa, whereas in epididymal sperm from caput, corpus, and cauda there are two forms of 47- and 43-kDa. Testis forms contain complex carbohydrate residues. Epididymal sperm forms are N-glycosylated. Then undergoes significant glycosylation in the testis and that the majority of these glycoconjugates are removed by the time sperm reach the caput epididymis.

Its subcellular location is the cytoplasmic vesicle. It localises to the secretory vesicle. It is found in the acrosome. Functionally, involved in fertilization ability of sperm. The protein is Sperm equatorial segment protein 1 of Macaca fascicularis (Crab-eating macaque).